The sequence spans 117 residues: Ribosome-binding factor A (117 aa).

This sequence belongs to the RbfA family. Monomer. Binds 30S ribosomal subunits, but not 50S ribosomal subunits or 70S ribosomes.

The protein resides in the cytoplasm. Functionally, one of several proteins that assist in the late maturation steps of the functional core of the 30S ribosomal subunit. Associates with free 30S ribosomal subunits (but not with 30S subunits that are part of 70S ribosomes or polysomes). Required for efficient processing of 16S rRNA. May interact with the 5'-terminal helix region of 16S rRNA. The protein is Ribosome-binding factor A of Bacillus subtilis (strain 168).